The sequence spans 238 residues: Protein-lysine N-methyltransferase efm4 (238 aa).

Belongs to the class I-like SAM-binding methyltransferase superfamily. EFM4 family.

The protein resides in the cytoplasm. Its subcellular location is the nucleus. In terms of biological role, S-adenosyl-L-methionine-dependent protein-lysine N-methyltransferase that mono- and dimethylates elongation factor 1-alpha at 'Lys-316'. May play a role in intracellular transport. The sequence is that of Protein-lysine N-methyltransferase efm4 from Schizosaccharomyces pombe (strain 972 / ATCC 24843) (Fission yeast).